The primary structure comprises 238 residues: Ribonuclease PH (238 aa).

Phosphate contacts are provided by residues Arg86 and 124–126 (GTR).

Belongs to the RNase PH family. As to quaternary structure, homohexameric ring arranged as a trimer of dimers.

It carries out the reaction tRNA(n+1) + phosphate = tRNA(n) + a ribonucleoside 5'-diphosphate. Functionally, phosphorolytic 3'-5' exoribonuclease that plays an important role in tRNA 3'-end maturation. Removes nucleotide residues following the 3'-CCA terminus of tRNAs; can also add nucleotides to the ends of RNA molecules by using nucleoside diphosphates as substrates, but this may not be physiologically important. Probably plays a role in initiation of 16S rRNA degradation (leading to ribosome degradation) during starvation. The chain is Ribonuclease PH from Haemophilus influenzae (strain PittGG).